A 565-amino-acid polypeptide reads, in one-letter code: UvrABC system protein C (565 aa).

One can recognise a GIY-YIG domain in the interval Glu12–Val89. The UVR domain occupies Lys195–Ile230.

Belongs to the UvrC family. In terms of assembly, interacts with UvrB in an incision complex.

Its subcellular location is the cytoplasm. The UvrABC repair system catalyzes the recognition and processing of DNA lesions. UvrC both incises the 5' and 3' sides of the lesion. The N-terminal half is responsible for the 3' incision and the C-terminal half is responsible for the 5' incision. This chain is UvrABC system protein C, found in Hydrogenobaculum sp. (strain Y04AAS1).